The primary structure comprises 259 residues: Ribosomal RNA small subunit methyltransferase A (259 aa).

S-adenosyl-L-methionine contacts are provided by Asn13, Leu15, Gly40, Glu61, Asp85, and Asn103.

The protein belongs to the class I-like SAM-binding methyltransferase superfamily. rRNA adenine N(6)-methyltransferase family. RsmA subfamily.

The protein localises to the cytoplasm. It carries out the reaction adenosine(1518)/adenosine(1519) in 16S rRNA + 4 S-adenosyl-L-methionine = N(6)-dimethyladenosine(1518)/N(6)-dimethyladenosine(1519) in 16S rRNA + 4 S-adenosyl-L-homocysteine + 4 H(+). Specifically dimethylates two adjacent adenosines (A1518 and A1519) in the loop of a conserved hairpin near the 3'-end of 16S rRNA in the 30S particle. May play a critical role in biogenesis of 30S subunits. The sequence is that of Ribosomal RNA small subunit methyltransferase A from Neisseria meningitidis serogroup B (strain ATCC BAA-335 / MC58).